Reading from the N-terminus, the 370-residue chain is Divinyl chlorophyll a/b light-harvesting protein PcbD (370 aa).

6 consecutive transmembrane segments (helical) span residues 27–47, 88–108, 140–160, 201–221, 248–268, and 315–335; these read FIASHIGHTGLIAFAAGGSTL, VAAVAIVHLVLSMVYGGGALL, FILGHHLFFFGMACIAFVEWA, VMGGHAFLAFAELTGATIHMV, AVLSWSLAGIGWMAIVAAFWA, and LVNVHYYFGFFFLQGHFWHAL.

This sequence belongs to the PsbB/PsbC family. IsiA/Pcb subfamily. In terms of assembly, the antenna complex consists of divinyl chlorophylls (a and b) and divinyl chlorophyll a/b binding proteins and binds more divinyl chlorophyll b than does the antenna complex from high-light-adapted Prochlorococcus. It depends on divinyl chlorophyll a as a cofactor. Divinyl chlorophyll b serves as cofactor.

It is found in the cellular thylakoid membrane. Its function is as follows. The antenna complex functions as a light receptor, it captures and delivers excitation energy to photosystems II and I. The Prochlorales pcb genes are not related to higher plant LHCs. This chain is Divinyl chlorophyll a/b light-harvesting protein PcbD (pcbD), found in Prochlorococcus marinus (strain NATL2A).